The chain runs to 213 residues: Nucleolar protein 12 (213 aa).

The stretch at 33–96 (GFHKRKVERK…RLVTAKTESV (64 aa)) forms a coiled coil. Residues 118-213 (ARLLGLTPPE…LTGKARHSGE (96 aa)) are disordered. 2 stretches are compositionally biased toward basic residues: residues 170–182 (AHSR…KHPR) and 198–213 (KAQR…HSGE).

It belongs to the RRP17 family. In terms of assembly, interacts with KIAA1191.

The protein resides in the nucleus. Its subcellular location is the nucleolus. It is found in the cytoplasm. Its function is as follows. Multifunctional RNA binding protein that plays a role in RNA metabolism and DNA maintenance. Participates in the resolution of DNA stress and the maintenance of genome integrity by localizing to sites of DNA insults. Also plays a role in proper nucleolar organization by limiting nucleolar size and regulating nucleolar number. Mechanistically, regulates the nucleolar levels of fibrillarin and nucleolin, two key players in pre-rRNA processing and ribosome assembly. This Homo sapiens (Human) protein is Nucleolar protein 12 (NOL12).